We begin with the raw amino-acid sequence, 70 residues long: UPF0426 protein ssl0294 (70 aa).

The protein belongs to the UPF0426 family.

In Synechocystis sp. (strain ATCC 27184 / PCC 6803 / Kazusa), this protein is UPF0426 protein ssl0294.